The chain runs to 399 residues: Succinate--CoA ligase [ADP-forming] subunit beta (399 aa).

The region spanning 9–254 (KAVLAEFGAP…ESEEDPKEIE (246 aa)) is the ATP-grasp domain. Residues Lys46, 53-55 (GRG), Glu109, Ala112, and Glu117 contribute to the ATP site. Mg(2+) contacts are provided by Asn209 and Asp223. Substrate is bound by residues Asn274 and 331–333 (GIM).

It belongs to the succinate/malate CoA ligase beta subunit family. Heterotetramer of two alpha and two beta subunits. The cofactor is Mg(2+).

It carries out the reaction succinate + ATP + CoA = succinyl-CoA + ADP + phosphate. The catalysed reaction is GTP + succinate + CoA = succinyl-CoA + GDP + phosphate. Its pathway is carbohydrate metabolism; tricarboxylic acid cycle; succinate from succinyl-CoA (ligase route): step 1/1. Its function is as follows. Succinyl-CoA synthetase functions in the citric acid cycle (TCA), coupling the hydrolysis of succinyl-CoA to the synthesis of either ATP or GTP and thus represents the only step of substrate-level phosphorylation in the TCA. The beta subunit provides nucleotide specificity of the enzyme and binds the substrate succinate, while the binding sites for coenzyme A and phosphate are found in the alpha subunit. This Caulobacter sp. (strain K31) protein is Succinate--CoA ligase [ADP-forming] subunit beta.